A 355-amino-acid polypeptide reads, in one-letter code: D-alanine--D-alanine ligase (355 aa).

The region spanning 143–350 (KQIFSNLSIP…IDQLVAKLID (208 aa)) is the ATP-grasp domain. 178–233 (IEKLNLPVFVKPANSGSSLGISKAKNKSEIIKALQKAWEIDSRIVIEEGLNVRELE) provides a ligand contact to ATP. Mg(2+) contacts are provided by D303, E317, and N319.

This sequence belongs to the D-alanine--D-alanine ligase family. Requires Mg(2+) as cofactor. Mn(2+) is required as a cofactor.

The protein localises to the cytoplasm. It catalyses the reaction 2 D-alanine + ATP = D-alanyl-D-alanine + ADP + phosphate + H(+). It participates in cell wall biogenesis; peptidoglycan biosynthesis. In terms of biological role, cell wall formation. The protein is D-alanine--D-alanine ligase of Prochlorococcus marinus (strain MIT 9515).